The following is a 258-amino-acid chain: 6-carboxyhexanoate--CoA ligase (258 aa).

It belongs to the BioW family. Homodimer. The cofactor is Mg(2+).

It carries out the reaction heptanedioate + ATP + CoA = 6-carboxyhexanoyl-CoA + AMP + diphosphate. The protein operates within metabolic intermediate metabolism; pimeloyl-CoA biosynthesis; pimeloyl-CoA from pimelate: step 1/1. Its function is as follows. Catalyzes the transformation of pimelate into pimeloyl-CoA with concomitant hydrolysis of ATP to AMP. The polypeptide is 6-carboxyhexanoate--CoA ligase (Bacillus atrophaeus (strain 1942)).